The chain runs to 214 residues: Ras-related protein RABA2b (214 aa).

19 to 26 (GDSGVGKS) contacts GTP. Positions 41 to 49 (SKSTIGVEF) match the Effector region motif. Residues 67 to 71 (DTAGQ), 125 to 128 (NKSD), and 155 to 156 (SA) contribute to the GTP site. 2 S-geranylgeranyl cysteine lipidation sites follow: cysteine 211 and cysteine 212.

Belongs to the small GTPase superfamily. Rab family. In terms of tissue distribution, expressed in root tips.

It is found in the endosome membrane. It localises to the golgi apparatus. Its subcellular location is the trans-Golgi network membrane. Its function is as follows. Intracellular vesicle trafficking and protein transport. The polypeptide is Ras-related protein RABA2b (RABA2B) (Arabidopsis thaliana (Mouse-ear cress)).